Consider the following 282-residue polypeptide: tRNA (guanine-N(1)-)-methyltransferase (282 aa).

145–150 (IGDYVL) contacts S-adenosyl-L-methionine.

This sequence belongs to the RNA methyltransferase TrmD family. As to quaternary structure, homodimer.

It localises to the cytoplasm. The catalysed reaction is guanosine(37) in tRNA + S-adenosyl-L-methionine = N(1)-methylguanosine(37) in tRNA + S-adenosyl-L-homocysteine + H(+). Functionally, specifically methylates guanosine-37 in various tRNAs. This is tRNA (guanine-N(1)-)-methyltransferase from Streptomyces avermitilis (strain ATCC 31267 / DSM 46492 / JCM 5070 / NBRC 14893 / NCIMB 12804 / NRRL 8165 / MA-4680).